A 657-amino-acid polypeptide reads, in one-letter code: MAPQKHGSGGNGFYGNSASKAANGGAHASSGVVMTSVKRLKMEQIQADHQLFLEAFEKPTQIYRFLRTRNLITPIFLHRSLTYMSHRNSRTNSKRKSFSLNDLLFKVEKSKVDPESHNLASNLQLTFTGFFHKTEKQLQNSENEENSVSVEVLLVKLCHKKRKDVTCPVKQVPTGKKQVPLNPDISPTKLGAFPTLVVPSHEFEPVNSNTVKSYSLLFRASRPWGREHNGMTTRDTNVIEELSNRKKRYCSHQDDGETTFVAQMTVFDKNRRLQLLDGEYEVSMQEIEESPVGKKRATWETILDEKWVPPFETFSQGPTLQFTLRWTNDTADKATAPVAKPLATRNSESSTVDSSKTSNIKPPQAVAVNDSLGTDLPVRREQTHIEPCQKLHVYYQFLYNNNTRQQTEARDDLHCPWCTLNCRKLYSLLKHLKLSHSRFIFNYVPHPKGARIDVSINECYDGSYVGNPQDILCQPGFAFSRNGPVKRTPVTQILVCRPKRSKPSLSEFLEPEDGEQEQQRTYISGHNRLYFHSDSCTPLRPQEMEVDSEDERDPDWLREKTAMQIEEFTDVNEGEKEIMKLWNLLVMKHGFIADNQMNQACMSFVEQHGTIMVEKNLCRNALLHLINMHDFGLITTATIDKAMTHLRDLTQQSIAQH.

The disordered stretch occupies residues 335-363 (TAPVAKPLATRNSESSTVDSSKTSNIKPP). A compositionally biased stretch (low complexity) spans 347–358 (SESSTVDSSKTS). The segment at 413–436 (LHCPWCTLNCRKLYSLLKHLKLSH) adopts a C2H2-type zinc-finger fold. The VEFS-box stretch occupies residues 528–604 (RLYFHSDSCT…NQMNQACMSF (77 aa)).

The protein belongs to the VEFS (VRN2-EMF2-FIS2-SU(Z)12) family. Component of the prc2/eed-ezh2 complex.

The protein localises to the nucleus. Its function is as follows. Polycomb group (PcG) protein. Component of the prc2/eed-ezh2 complex, which methylates 'Lys-9' and 'Lys-27' of histone H3, leading to transcriptional repression of the affected target gene. This chain is Polycomb protein suz12-A (suz12a), found in Danio rerio (Zebrafish).